Consider the following 786-residue polypeptide: MIPSQSNSFSGSVITLYFFLLGSLVLRTLASSRLHYCRHDQRDALLEFKHEFPVSESKPSPSLSSWNKTSDCCFWEGVTCDDESGEVVSLDLSYVLLNNSLKPTSGLFKLQQLQNLTLSDCHLYGEVTSSLGNLSRLTHLDLSSNQLTGEVLASVSKLNQLRDLLLSENSFSGNIPTSFTNLTKLSSLDISSNQFTLENFSFILPNLTSLSSLNVASNHFKSTLPSDMSGLHNLKYFDVRENSFVGTFPTSLFTIPSLQIVYLEGNQFMGPIKFGNISSSSRLWDLNLADNKFDGPIPEYISEIHSLIVLDLSHNNLVGPIPTSISKLVNLQHLSLSNNTLEGEVPGCLWGLMTVTLSHNSFNSFGKSSSGALDGESMQELDLGSNSLGGPFPHWICKQRFLKYLDLSNNLFNGSIPPCLKNSTYWLKGLVLRNNSFSGFLPDVFVNASMLLSLDVSYNRLEGKLPKSLINCTGMELLNVGSNIIKDTFPSWLVSLPSLRVLILRSNAFYGSLYYDHISFGFQHLRLIDISQNGFSGTLSPLYFSNWREMVTSVLEENGSNIGTEDWYMGEKGPEFSHSNSMTMIYKGVETDFLRIPYFFRAIDFSGNRFFGNIPESVGLLKELRLLNLSGNSFTSNIPQSLANLTNLETLDLSRNQLSGHIPRDLGSLSFLSTMNFSHNLLEGPVPLGTQFQSQHCSTFMDNLRLYGLEKICGKAHAPSSTPLESEEFSEPEEQVINWIAAAIAYGPGVFCGLVIGHIFFTAHKHEWFMEKFHRNKRRVVTTSAR.

A signal peptide spans 1-30 (MIPSQSNSFSGSVITLYFFLLGSLVLRTLA). The Extracellular segment spans residues 31–739 (SSRLHYCRHD…SEPEEQVINW (709 aa)). Residues Asn67, Asn98, Asn115, and Asn133 are each glycosylated (N-linked (GlcNAc...) asparagine). LRR repeat units follow at residues 110–133 (LQQL…SLGN), 134–158 (LSRL…VSKL), 159–181 (NQLR…SFTN), and 183–204 (TKLS…SFIL). Residues Asn181, Asn199, and Asn206 are each glycosylated (N-linked (GlcNAc...) asparagine). LRR repeat units follow at residues 207 to 231 (LTSL…MSGL), 233 to 255 (NLKY…LFTI), 257 to 279 (SLQI…NISS), 280 to 304 (SSRL…ISEI), 305 to 328 (HSLI…ISKL), 329 to 352 (VNLQ…LWGL), 354 to 375 (TVTL…ALDG), 376 to 399 (ESMQ…ICKQ), 400 to 423 (RFLK…LKNS), 425 to 447 (YWLK…VFVN), 448 to 472 (ASML…LINC), 474 to 496 (GMEL…LVSL), 497 to 524 (PSLR…GFQH), and 526 to 546 (RLID…YFSN). Asn276 is a glycosylation site (N-linked (GlcNAc...) asparagine). Residue Asn338 is glycosylated (N-linked (GlcNAc...) asparagine). Asn413, Asn422, Asn434, Asn447, and Asn471 each carry an N-linked (GlcNAc...) asparagine glycan. Asn558 carries an N-linked (GlcNAc...) asparagine glycan. LRR repeat units follow at residues 596–621 (IPYF…VGLL), 622–645 (KELR…LANL), 646–669 (TNLE…LGSL), and 671–694 (FLST…QFQS). Residues Asn628 and Asn644 are each glycosylated (N-linked (GlcNAc...) asparagine). Asn676 carries an N-linked (GlcNAc...) asparagine glycan. Residues 740 to 760 (IAAAIAYGPGVFCGLVIGHIF) traverse the membrane as a helical segment. Residues 761 to 786 (FTAHKHEWFMEKFHRNKRRVVTTSAR) lie on the Cytoplasmic side of the membrane.

It belongs to the RLP family.

The protein resides in the cell membrane. Its function is as follows. Receptor for microbe-associated molecular patterns (MAMPs) that induces a BAK1-dependent basal immune response to necrotrophic fungi (e.g. S.sclerotiorum) in the presence of MAMPs (e.g. flg22 and SCLEROTINIA CULTURE FILTRATE ELICITOR1 (SCFE1) from the necrotrophic fungal pathogen S.sclerotiorum). Functionality seems to depend on the presence of the receptor kinase SOBIR1 as an adapter protein. Required for full non-host resistance to bacterial pathogens (e.g. P.syringae pv phaseolicola). This Arabidopsis thaliana (Mouse-ear cress) protein is Receptor-like protein 30.